The chain runs to 201 residues: Diadenylate cyclase CdaS (201 aa).

The DAC domain maps to 54–201 (QTLAATYYIQ…LNGILYTISL (148 aa)).

Belongs to the adenylate cyclase family. DacB/CdaS subfamily. In terms of assembly, probably forms a homohexamer. It depends on Mg(2+) as a cofactor.

It catalyses the reaction 2 ATP = 3',3'-c-di-AMP + 2 diphosphate. One of 3 paralogous diadenylate cyclases (DAC) in this bacteria catalyzing the condensation of 2 ATP molecules into cyclic di-AMP (c-di-AMP). It has slow DAC activity with ADP as a substrate and may have weak ADPase activity. Required for efficient spore formation, whereas in B.subtilis, it is required for efficient spore germination. It is produced under the control of different sigma factors in the two bacteria. It is also required for parasporal crystal formation. The chain is Diadenylate cyclase CdaS from Bacillus thuringiensis (strain BMB171).